The following is a 602-amino-acid chain: Elongation factor 4 (602 aa).

The tr-type G domain maps to 2-184 (NHIRNFSIIA…LIVAKVPAPR (183 aa)). GTP contacts are provided by residues 14–19 (DHGKST) and 131–134 (NKMD).

It belongs to the TRAFAC class translation factor GTPase superfamily. Classic translation factor GTPase family. LepA subfamily.

The protein resides in the cell inner membrane. It carries out the reaction GTP + H2O = GDP + phosphate + H(+). Functionally, required for accurate and efficient protein synthesis under certain stress conditions. May act as a fidelity factor of the translation reaction, by catalyzing a one-codon backward translocation of tRNAs on improperly translocated ribosomes. Back-translocation proceeds from a post-translocation (POST) complex to a pre-translocation (PRE) complex, thus giving elongation factor G a second chance to translocate the tRNAs correctly. Binds to ribosomes in a GTP-dependent manner. In Paracidovorax citrulli (strain AAC00-1) (Acidovorax citrulli), this protein is Elongation factor 4.